A 473-amino-acid polypeptide reads, in one-letter code: Cucurbitadienol 11-hydroxylase (473 aa).

The helical transmembrane segment at 4–24 (VVLGLATLFVAYYIHWINKWR) threads the bilayer. Cysteine 422 contacts heme.

The protein belongs to the cytochrome P450 family. Heme serves as cofactor. In terms of tissue distribution, highly expressed in young fruits 15 days after anthesis (15-DAA). Also observed in roots.

Its subcellular location is the membrane. The enzyme catalyses cucurbitadienol + 2 reduced [NADPH--hemoprotein reductase] + 2 O2 = 11-oxocucurbitadienol + 2 oxidized [NADPH--hemoprotein reductase] + 3 H2O + 2 H(+). It carries out the reaction cucurbitadienol + reduced [NADPH--hemoprotein reductase] + O2 = 11-hydroxycucurbitadienol + oxidized [NADPH--hemoprotein reductase] + H2O + H(+). It catalyses the reaction 11-hydroxycucurbitadienol + reduced [NADPH--hemoprotein reductase] + O2 = 11-oxocucurbitadienol + oxidized [NADPH--hemoprotein reductase] + 2 H2O + H(+). The catalysed reaction is (24R)-24,25-dihydroxycucurbitadienol + reduced [NADPH--hemoprotein reductase] + O2 = mogrol + oxidized [NADPH--hemoprotein reductase] + H2O + H(+). It functions in the pathway secondary metabolite biosynthesis; terpenoid biosynthesis. Functionally, hydroxylase involved in the biosynthesis of cucurbitacin and mogroside tetracyclic triterpene natural products (e.g. siamenoside I and mogrosides IV, V and VI). Cucurbitacins have cytotoxic properties and exhibit deterrent taste as a defense barrier against herbivores. Mogrosides are nonsugar highly oxygenated compounds used as high-intensity zero-calorie sweeteners; they also possess pharmacological properties such as regulating immunity, lowering blood sugar and lipid levels, protecting the liver, and acting as antioxidants and antitumor agents. Catalyzes the oxidation of cucurbitadienol at the C-11 position to produce 11-oxocucurbitadienol, a possible biosynthetic intermediate from cucurbitadienol to mogrol. Also mediates the conversion of 24,25-dihydroxycucurbitadienol to mogrol. The chain is Cucurbitadienol 11-hydroxylase from Siraitia grosvenorii (Monk's fruit).